Reading from the N-terminus, the 401-residue chain is Adenosine 3'-phospho 5'-phosphosulfate transporter 2 (401 aa).

N-linked (GlcNAc...) asparagine glycans are attached at residues Asn-12 and Asn-71. Helical transmembrane passes span Leu-78–Leu-98, Tyr-111–Leu-131, Met-147–Leu-167, Pro-170–Ile-190, Val-200–Ile-220, and Asn-223–Gly-243. N-linked (GlcNAc...) asparagine glycosylation is present at Asn-254. The next 4 membrane-spanning stretches (helical) occupy residues Ile-267–Thr-287, Gly-298–Leu-317, Leu-324–Ala-346, and Phe-349–Tyr-369.

The protein belongs to the nucleotide-sugar transporter family. SLC35B subfamily.

Its subcellular location is the golgi apparatus membrane. The enzyme catalyses 3'-phosphoadenylyl sulfate(in) + adenosine 3',5'-bisphosphate(out) = 3'-phosphoadenylyl sulfate(out) + adenosine 3',5'-bisphosphate(in). Its function is as follows. Probably functions as a 3'-phosphoadenylyl sulfate:adenosine 3',5'-bisphosphate antiporter at the Golgi membranes. Mediates the transport from the cytosol into the lumen of the Golgi of 3'-phosphoadenylyl sulfate/adenosine 3'-phospho 5'-phosphosulfate (PAPS), a universal sulfuryl donor for sulfation events that take place in that compartment. The sequence is that of Adenosine 3'-phospho 5'-phosphosulfate transporter 2 from Pongo abelii (Sumatran orangutan).